The following is a 106-amino-acid chain: Large ribosomal subunit protein uL24 (106 aa).

Positions 69 to 106 (SNLNPVDPKTGKATRVGRKVSSEGTLVRYSKKSGEEIK) are disordered.

Belongs to the universal ribosomal protein uL24 family. As to quaternary structure, part of the 50S ribosomal subunit.

One of two assembly initiator proteins, it binds directly to the 5'-end of the 23S rRNA, where it nucleates assembly of the 50S subunit. Its function is as follows. One of the proteins that surrounds the polypeptide exit tunnel on the outside of the subunit. This is Large ribosomal subunit protein uL24 from Bacteroides fragilis (strain ATCC 25285 / DSM 2151 / CCUG 4856 / JCM 11019 / LMG 10263 / NCTC 9343 / Onslow / VPI 2553 / EN-2).